The primary structure comprises 362 residues: Very-long-chain (3R)-3-hydroxyacyl-CoA dehydratase 3 (362 aa).

M1 carries the N-acetylmethionine modification. At 1 to 149 (MENQVLTPHV…ETLTNLRKGY (149 aa)) the chain is on the cytoplasmic side. A CS domain is found at 5–94 (VLTPHVYWAQ…KVSQWWERLT (90 aa)). T7 carries the post-translational modification Phosphothreonine. Positions 111-136 (LDESDAEMELRAKEEERLNKLRLESE) form a coiled coil. S114 and S135 each carry phosphoserine. A helical membrane pass occupies residues 150 to 170 (LFMYNLVQFLGFSWIFVNLTV). The Lumenal segment spans residues 171 to 185 (RFCILGKESFYDTFH). A helical membrane pass occupies residues 186-207 (TVADMMYFCQMLAVVETINAAI). Topologically, residues 208–217 (GVTTSPVLPS) are cytoplasmic. Residues 218–235 (LIQLLGRNFILFIIFGTM) traverse the membrane as a helical segment. Residues 236–241 (EEMQNK) lie on the Lumenal side of the membrane. Residues 242–256 (AVVFFVFYLWSAIEI) traverse the membrane as a helical segment. Residues 257 to 279 (FRYSFYMLTCIDMDWKVLTWLRY) are Cytoplasmic-facing. Residues 280–298 (TLWIPLYPLGCLAEAVSVI) traverse the membrane as a helical segment. Catalysis depends on residues Y286 and E293. The Lumenal portion of the chain corresponds to 299–322 (QSIPIFNETGRFSFTLPYPVKIKV). A helical transmembrane segment spans residues 323 to 343 (RFSFFLQIYLIMIFLGLYINF). Residues 344–362 (RHLYKQRRRRYGQKKKKIH) are Cytoplasmic-facing.

It belongs to the very long-chain fatty acids dehydratase HACD family. As to quaternary structure, may interact with enzymes of the ELO family (including ELOVL1); with those enzymes that mediate condensation, the first of the four steps of the reaction cycle responsible for fatty acids elongation, may be part of a larger fatty acids elongase complex. Interacts with RAC1. Associates with internalized insulin receptor/INSR complexes on Golgi/endosomal membranes; HACD3/PTPLAD1 together with ATIC and PRKAA2/AMPK2 is proposed to be part of a signaling network regulating INSR autophosphorylation and endocytosis. In terms of tissue distribution, highly expressed in testis, kidney, brain, liver and weakly in skeletal muscle, spleen and heart. No expression detected in leukocytes.

The protein localises to the endoplasmic reticulum membrane. It carries out the reaction a very-long-chain (3R)-3-hydroxyacyl-CoA = a very-long-chain (2E)-enoyl-CoA + H2O. The catalysed reaction is (3R)-hydroxyhexadecanoyl-CoA = (2E)-hexadecenoyl-CoA + H2O. It functions in the pathway lipid metabolism; fatty acid biosynthesis. Its function is as follows. Catalyzes the third of the four reactions of the long-chain fatty acids elongation cycle. This endoplasmic reticulum-bound enzymatic process, allows the addition of two carbons to the chain of long- and very long-chain fatty acids/VLCFAs per cycle. This enzyme catalyzes the dehydration of the 3-hydroxyacyl-CoA intermediate into trans-2,3-enoyl-CoA, within each cycle of fatty acid elongation. Thereby, it participates in the production of VLCFAs of different chain lengths that are involved in multiple biological processes as precursors of membrane lipids and lipid mediators. May be involved in Rac1-signaling pathways leading to the modulation of gene expression. Promotes insulin receptor/INSR autophosphorylation and is involved in INSR internalization. The chain is Very-long-chain (3R)-3-hydroxyacyl-CoA dehydratase 3 from Homo sapiens (Human).